We begin with the raw amino-acid sequence, 548 residues long: Leucine-rich repeat-containing protein 56 (548 aa).

LRR repeat units lie at residues 94 to 115, 117 to 138, 139 to 160, 161 to 182, and 186 to 206; these read NLIQLKLNHSCLGSLRDLGTSL, QLQVLWLARCGLTDLDGIGSFL, ALKELYVSYNNISDLSPLCLLE, QLEVLDLEGNNVEDLGQMRYLQ, and RLTTLTLEGNLVCLKPDPGPS. Positions 207-249 constitute an LRRCT domain; that stretch reads NKAPQDYNYRAEVKKLIPQLHILDEVPTTCTNLPAPQKLSQDW. The segment at 405–433 is disordered; it reads LTHVQAQDPQKAPIEQEDQTGPKTSLTPL.

It belongs to the LRRC56 family. As to quaternary structure, interacts with IFT88.

The protein resides in the cell projection. Its subcellular location is the cilium. Functionally, required for the assembly of dynein arms. In Rattus norvegicus (Rat), this protein is Leucine-rich repeat-containing protein 56 (Lrrc56).